The primary structure comprises 380 residues: Chaperone protein DnaJ (380 aa).

The 65-residue stretch at 5–69 (DFYEVLGVGR…QKKAAYDQYG (65 aa)) folds into the J domain. The CR-type zinc-finger motif lies at 135–213 (GCSKEIRVPT…CHGQGRVEKT (79 aa)). Cysteine 148, cysteine 151, cysteine 165, cysteine 168, cysteine 187, cysteine 190, cysteine 201, and cysteine 204 together coordinate Zn(2+). CXXCXGXG motif repeat units follow at residues 148–155 (CDSCDGSG), 165–172 (CGTCHGQG), 187–194 (CPHCHGRG), and 201–208 (CNSCHGQG).

The protein belongs to the DnaJ family. As to quaternary structure, homodimer. The cofactor is Zn(2+).

Its subcellular location is the cytoplasm. In terms of biological role, participates actively in the response to hyperosmotic and heat shock by preventing the aggregation of stress-denatured proteins and by disaggregating proteins, also in an autonomous, DnaK-independent fashion. Unfolded proteins bind initially to DnaJ; upon interaction with the DnaJ-bound protein, DnaK hydrolyzes its bound ATP, resulting in the formation of a stable complex. GrpE releases ADP from DnaK; ATP binding to DnaK triggers the release of the substrate protein, thus completing the reaction cycle. Several rounds of ATP-dependent interactions between DnaJ, DnaK and GrpE are required for fully efficient folding. Also involved, together with DnaK and GrpE, in the DNA replication of plasmids through activation of initiation proteins. In Photobacterium profundum (strain SS9), this protein is Chaperone protein DnaJ.